The following is a 173-amino-acid chain: Alpha-crystallin A chain (173 aa).

Methionine 1 is subject to N-acetylmethionine. The segment at 1–63 (MDVTIQHPWF…RTVLDSGISE (63 aa)) is required for complex formation with BFSP1 and BFSP2. Glutamine 6 bears the Deamidated glutamine; partial mark. Position 45 is a phosphoserine (serine 45). Residue glutamine 50 is modified to Deamidated glutamine; partial. In terms of domain architecture, sHSP spans 52-162 (LFRTVLDSGI…GHSERAIPVS (111 aa)). N6-acetyllysine is present on lysine 70. Residue glutamine 90 is modified to Deamidated glutamine; partial. The residue at position 99 (lysine 99) is an N6-acetyllysine. Zn(2+) is bound at residue histidine 100. A Deamidated asparagine; partial modification is found at asparagine 101. Zn(2+) is bound by residues glutamate 102 and histidine 107. A Phosphoserine modification is found at serine 122. Asparagine 123 carries the deamidated asparagine; partial modification. The disordered stretch occupies residues 145 to 173 (KVQSGLDAGHSERAIPVSREEKPSSAPSS). At glutamine 147 the chain carries Deamidated glutamine; partial. A compositionally biased stretch (basic and acidic residues) spans 153-167 (GHSERAIPVSREEKP). Histidine 154 is a binding site for Zn(2+). Serine 162 is a glycosylation site (O-linked (GlcNAc) serine).

It belongs to the small heat shock protein (HSP20) family. In terms of assembly, heteromer composed of three CRYAA and one CRYAB subunits. Inter-subunit bridging via zinc ions enhances stability, which is crucial as there is no protein turn over in the lens. Can also form homodimers and homotetramers (dimers of dimers) which serve as the building blocks of homooligomers. Within homooligomers, the zinc-binding motif is created from residues of 3 different molecules. His-100 and Glu-102 from one molecule are ligands of the zinc ion, and His-107 and His-154 residues from additional molecules complete the site with tetrahedral coordination geometry. Part of a complex required for lens intermediate filament formation composed of BFSP1, BFSP2 and CRYAA. Acetylation at Lys-70 may increase chaperone activity. In terms of processing, undergoes age-dependent proteolytical cleavage at the C-terminus.

It localises to the cytoplasm. The protein localises to the nucleus. Functionally, contributes to the transparency and refractive index of the lens. Acts as a chaperone, preventing aggregation of various proteins under a wide range of stress conditions. Required for the correct formation of lens intermediate filaments as part of a complex composed of BFSP1, BFSP2 and CRYAA. The sequence is that of Alpha-crystallin A chain (CRYAA) from Oryctolagus cuniculus (Rabbit).